The primary structure comprises 130 residues: Small ribosomal subunit protein uS11 (130 aa).

This sequence belongs to the universal ribosomal protein uS11 family. In terms of assembly, part of the 30S ribosomal subunit. Interacts with proteins S7 and S18. Binds to IF-3.

In terms of biological role, located on the platform of the 30S subunit, it bridges several disparate RNA helices of the 16S rRNA. Forms part of the Shine-Dalgarno cleft in the 70S ribosome. The chain is Small ribosomal subunit protein uS11 from Microcystis aeruginosa (strain NIES-843 / IAM M-2473).